The chain runs to 707 residues: D-(-)-3-hydroxybutyrate oligomer hydrolase (707 aa).

The signal sequence occupies residues 1–32 (MASVFKVRSASGHVPVVRTLAAMMAVTVVLTA). Serine 321 serves as the catalytic Charge relay system.

It belongs to the D-(-)-3-hydroxybutyrate oligomer hydrolase family.

It is found in the secreted. It catalyses the reaction (3R)-hydroxybutanoate dimer + H2O = 2 (R)-3-hydroxybutanoate + H(+). It functions in the pathway lipid metabolism; butanoate metabolism. In terms of biological role, participates in the degradation of poly-3-hydroxybutyrate (PHB). It works downstream of poly(3-hydroxybutyrate) depolymerase, hydrolyzing D(-)-3-hydroxybutyrate oligomers of various length (3HB-oligomers) into 3HB-monomers. In Paraburkholderia xenovorans (strain LB400), this protein is D-(-)-3-hydroxybutyrate oligomer hydrolase.